Consider the following 253-residue polypeptide: Transcription factor bHLH106 (253 aa).

Positions 66-115 (AALRNHKEAERRRRERINSHLNKLRNVLSCNSKTDKATLLAKVVQRVREL) constitute a bHLH domain.

Homodimer.

The protein localises to the nucleus. This Arabidopsis thaliana (Mouse-ear cress) protein is Transcription factor bHLH106 (BHLH106).